The chain runs to 449 residues: Tubulin beta chain (449 aa).

8 residues coordinate GTP: Gln-11, Glu-71, Ser-140, Gly-144, Thr-145, Gly-146, Asn-206, and Asn-228. Residue Glu-71 participates in Mg(2+) binding.

Belongs to the tubulin family. In terms of assembly, dimer of alpha and beta chains. A typical microtubule is a hollow water-filled tube with an outer diameter of 25 nm and an inner diameter of 15 nM. Alpha-beta heterodimers associate head-to-tail to form protofilaments running lengthwise along the microtubule wall with the beta-tubulin subunit facing the microtubule plus end conferring a structural polarity. Microtubules usually have 13 protofilaments but different protofilament numbers can be found in some organisms and specialized cells. Mg(2+) is required as a cofactor.

The protein resides in the cytoplasm. Its subcellular location is the cytoskeleton. In terms of biological role, tubulin is the major constituent of microtubules, a cylinder consisting of laterally associated linear protofilaments composed of alpha- and beta-tubulin heterodimers. Microtubules grow by the addition of GTP-tubulin dimers to the microtubule end, where a stabilizing cap forms. Below the cap, tubulin dimers are in GDP-bound state, owing to GTPase activity of alpha-tubulin. The sequence is that of Tubulin beta chain (TUBB) from Cicer arietinum (Chickpea).